We begin with the raw amino-acid sequence, 791 residues long: Nuclear cap-binding protein subunit 1-B (791 aa).

The tract at residues 1-24 (MSRRRHSDENDGGQPHKRRRTSEP) is disordered. The MIF4G domain maps to 28–240 (EDRLESLICR…CLWAQVQKLK (213 aa)). Residues 641–714 (LHSTIRKMNK…SEQKNLFLVI (74 aa)) are a coiled coil. Positions 664–687 (QRLAKQHKHRDSDDNDEDSGRKDG) are disordered.

The protein belongs to the NCBP1 family. In terms of assembly, component of the nuclear cap-binding complex (CBC), a heterodimer composed of ncbp1/cbp80 and ncbp2/cbp20 that interacts with m7GpppG-capped RNA. Component of an alternative nuclear cap-binding complex (CBC) composed of ncbp1/cbp80 and ncbp3.

It is found in the nucleus. The protein resides in the cytoplasm. Its function is as follows. Component of the cap-binding complex (CBC), which binds cotranscriptionally to the 5'-cap of pre-mRNAs and is involved in various processes such as pre-mRNA splicing, translation regulation, nonsense-mediated mRNA decay, RNA-mediated gene silencing (RNAi) by microRNAs (miRNAs) and mRNA export. The CBC complex is involved in mRNA export from the nucleus, leading to the recruitment of the mRNA export machinery to the 5'-end of mRNA and to mRNA export in a 5' to 3' direction through the nuclear pore. The CBC complex is also involved in mediating U snRNA and intronless mRNAs export from the nucleus. The CBC complex is essential for a pioneer round of mRNA translation, before steady state translation when the CBC complex is replaced by cytoplasmic cap-binding protein eIF4E. The pioneer round of mRNA translation mediated by the CBC complex plays a central role in nonsense-mediated mRNA decay (NMD), NMD only taking place in mRNAs bound to the CBC complex, but not on eIF4E-bound mRNAs. The CBC complex enhances NMD in mRNAs containing at least one exon-junction complex (EJC), promoting the interaction between UPF1 and UPF2. The CBC complex is also involved in 'failsafe' NMD, which is independent of the EJC complex, while it does not participate in Staufen-mediated mRNA decay (SMD). During cell proliferation, the CBC complex is also involved in microRNAs (miRNAs) biogenesis via its interaction with SRRT/ARS2 and is required for miRNA-mediated RNA interference. The CBC complex also acts as a negative regulator of parn, thereby acting as an inhibitor of mRNA deadenylation. In the CBC complex, NCBP1/CBP80 does not bind directly capped RNAs (m7GpppG-capped RNA) but is required to stabilize the movement of the N-terminal loop of NCBP2/CBP20 and lock the CBC into a high affinity cap-binding state with the cap structure. Associates with NCBP3 to form an alternative cap-binding complex (CBC) which plays a key role in mRNA export. The conventional CBC with NCBP2 binds both small nuclear RNA (snRNA) and messenger (mRNA) and is involved in their export from the nucleus whereas the alternative CBC with NCBP3 does not bind snRNA and associates only with mRNA thereby playing a role only in mRNA export. The polypeptide is Nuclear cap-binding protein subunit 1-B (ncbp1-b) (Xenopus laevis (African clawed frog)).